We begin with the raw amino-acid sequence, 546 residues long: E3 ubiquitin-protein ligase NEURL1B (546 aa).

An NHR 1 domain is found at 38-194 (APRFHAQAKG…ITDEVQLLES (157 aa)). Thr199 is subject to Phosphothreonine. The region spanning 270-424 (ELRFHATRGP…GVAGQLRLLG (155 aa)) is the NHR 2 domain. Residues 429 to 490 (SSETMTPSGS…FSAPEPTGSR (62 aa)) form a disordered region. Residues 457–471 (SSSASESSLVTAPSS) are compositionally biased toward low complexity. Residues 494–534 (CTVCFDSEVDTVIYTCGHMCLCHGCGLRLRRQARACCPICR) form an RING-type zinc finger.

In terms of assembly, interacts with DLL1 and DLL4. As to expression, expressed in the limb buds and dorsal root ganglia. Expressed in brain and kidney and at low levels in the heart.

Its subcellular location is the cytoplasm. It carries out the reaction S-ubiquitinyl-[E2 ubiquitin-conjugating enzyme]-L-cysteine + [acceptor protein]-L-lysine = [E2 ubiquitin-conjugating enzyme]-L-cysteine + N(6)-ubiquitinyl-[acceptor protein]-L-lysine.. It participates in protein modification; protein ubiquitination. E3 ubiquitin-protein ligase involved in regulation of the Notch pathway through influencing the stability and activity of several Notch ligands. The polypeptide is E3 ubiquitin-protein ligase NEURL1B (Neurl1b) (Mus musculus (Mouse)).